A 354-amino-acid chain; its full sequence is Fructose-bisphosphate aldolase (354 aa).

S50 serves as a coordination point for D-glyceraldehyde 3-phosphate. D83 (proton donor) is an active-site residue. Zn(2+) contacts are provided by H84, D105, E142, and H198. G199 contributes to the dihydroxyacetone phosphate binding site. A Zn(2+)-binding site is contributed by H232. Residues 233–235 and 275–278 contribute to the dihydroxyacetone phosphate site; these read GSS and NIDT.

Belongs to the class II fructose-bisphosphate aldolase family. It depends on Zn(2+) as a cofactor.

The catalysed reaction is beta-D-fructose 1,6-bisphosphate = D-glyceraldehyde 3-phosphate + dihydroxyacetone phosphate. The protein operates within carbohydrate degradation; glycolysis; D-glyceraldehyde 3-phosphate and glycerone phosphate from D-glucose: step 4/4. Its function is as follows. Catalyzes the aldol condensation of dihydroxyacetone phosphate (DHAP or glycerone-phosphate) with glyceraldehyde 3-phosphate (G3P) to form fructose 1,6-bisphosphate (FBP) in gluconeogenesis and the reverse reaction in glycolysis. In Stutzerimonas stutzeri (Pseudomonas stutzeri), this protein is Fructose-bisphosphate aldolase (fba).